Here is a 258-residue protein sequence, read N- to C-terminus: tRNA pseudouridine synthase A (258 aa).

Asp-54 functions as the Nucleophile in the catalytic mechanism. Tyr-112 lines the substrate pocket.

The protein belongs to the tRNA pseudouridine synthase TruA family. Homodimer.

The enzyme catalyses uridine(38/39/40) in tRNA = pseudouridine(38/39/40) in tRNA. Functionally, formation of pseudouridine at positions 38, 39 and 40 in the anticodon stem and loop of transfer RNAs. The polypeptide is tRNA pseudouridine synthase A (Geobacillus kaustophilus (strain HTA426)).